A 333-amino-acid polypeptide reads, in one-letter code: MNQTLIQEILEVVEQAAIASAKLTGLGQKDEADAAAVEAMRLRMGKIEMKGKIVIGEGERDEAPMLYIGEEVGSGNGPGVDFAVDPCEGTNLCANNQRGSMAVLAASDTGGLFNAPDFYMNKLAAPPAAKGKVDIRNSATENLKILSNCLDLAIDELTVVVMDRARHKGLIKEIRECGAKIQPISDGDVQAAIACGFAGTGTHCLMGIGAAPEGVISAAAMRALGGHFQGQLVYDPSIAQTSEWADYTKEGNIKRLNEMGITDIDKIYEANELASGENVIFAGSGITDGLLFDGVKFEKDCTRTSSLVISTLDSTCRFTNTIHMKDGAKSINL.

The Mn(2+) site is built by aspartate 33, glutamate 57, aspartate 85, and glutamate 88. Substrate-binding positions include 88–90 (EGT), tyrosine 119, 164–166 (RAR), and 186–188 (DGD). Position 213 (glutamate 213) interacts with Mn(2+).

It belongs to the FBPase class 2 family. As to quaternary structure, homotetramer. The cofactor is Mn(2+).

It carries out the reaction beta-D-fructose 1,6-bisphosphate + H2O = beta-D-fructose 6-phosphate + phosphate. The enzyme catalyses D-sedoheptulose 1,7-bisphosphate + H2O = D-sedoheptulose 7-phosphate + phosphate. It functions in the pathway carbohydrate biosynthesis; Calvin cycle. Functionally, catalyzes the hydrolysis of fructose 1,6-bisphosphate (Fru 1,6-P2) and sedoheptulose 1,7-bisphosphate (Sed 1,7-P2) to fructose 6-phosphate and sedoheptulose 7-phosphate, respectively. The sequence is that of D-fructose 1,6-bisphosphatase class 2/sedoheptulose 1,7-bisphosphatase from Prochlorococcus marinus (strain MIT 9515).